The chain runs to 145 residues: Small ribosomal subunit protein uS19 (145 aa).

Belongs to the universal ribosomal protein uS19 family. As to quaternary structure, component of the small ribosomal subunit.

The protein localises to the cytoplasm. Functionally, component of the small ribosomal subunit. The ribosome is a large ribonucleoprotein complex responsible for the synthesis of proteins in the cell. This Xenopus laevis (African clawed frog) protein is Small ribosomal subunit protein uS19 (rps15).